Consider the following 44-residue polypeptide: Photosystem I reaction center subunit IX (44 aa).

The helical transmembrane segment at 9–29 (WFRSAPVVATIWIVLTAGILV) threads the bilayer.

The protein belongs to the PsaJ family.

It is found in the cellular thylakoid membrane. Functionally, may help in the organization of the PsaE and PsaF subunits. The protein is Photosystem I reaction center subunit IX of Prochlorococcus marinus (strain MIT 9211).